The primary structure comprises 244 residues: tRNA pseudouridine synthase A (244 aa).

Catalysis depends on D52, which acts as the Nucleophile. A substrate-binding site is contributed by Y110.

The protein belongs to the tRNA pseudouridine synthase TruA family. As to quaternary structure, homodimer.

The catalysed reaction is uridine(38/39/40) in tRNA = pseudouridine(38/39/40) in tRNA. Its function is as follows. Formation of pseudouridine at positions 38, 39 and 40 in the anticodon stem and loop of transfer RNAs. In Thermoanaerobacter pseudethanolicus (strain ATCC 33223 / 39E) (Clostridium thermohydrosulfuricum), this protein is tRNA pseudouridine synthase A.